Reading from the N-terminus, the 560-residue chain is Dihydroxy-acid dehydratase (560 aa).

Residue Cys-52 participates in [2Fe-2S] cluster binding. Asp-84 lines the Mg(2+) pocket. Residue Cys-125 coordinates [2Fe-2S] cluster. Positions 126 and 127 each coordinate Mg(2+). Lys-127 is subject to N6-carboxylysine. Cys-197 contributes to the [2Fe-2S] cluster binding site. Glu-448 is a Mg(2+) binding site. The active-site Proton acceptor is the Ser-474.

The protein belongs to the IlvD/Edd family. As to quaternary structure, homodimer. The cofactor is [2Fe-2S] cluster. Mg(2+) is required as a cofactor.

It catalyses the reaction (2R)-2,3-dihydroxy-3-methylbutanoate = 3-methyl-2-oxobutanoate + H2O. It carries out the reaction (2R,3R)-2,3-dihydroxy-3-methylpentanoate = (S)-3-methyl-2-oxopentanoate + H2O. The protein operates within amino-acid biosynthesis; L-isoleucine biosynthesis; L-isoleucine from 2-oxobutanoate: step 3/4. It participates in amino-acid biosynthesis; L-valine biosynthesis; L-valine from pyruvate: step 3/4. Functionally, functions in the biosynthesis of branched-chain amino acids. Catalyzes the dehydration of (2R,3R)-2,3-dihydroxy-3-methylpentanoate (2,3-dihydroxy-3-methylvalerate) into 2-oxo-3-methylpentanoate (2-oxo-3-methylvalerate) and of (2R)-2,3-dihydroxy-3-methylbutanoate (2,3-dihydroxyisovalerate) into 2-oxo-3-methylbutanoate (2-oxoisovalerate), the penultimate precursor to L-isoleucine and L-valine, respectively. The chain is Dihydroxy-acid dehydratase from Francisella tularensis subsp. novicida (strain U112).